Here is a 461-residue protein sequence, read N- to C-terminus: pre-mRNA splicing regulator USH1G (461 aa).

ANK repeat units lie at residues 31–60 (DGMT…DPDK), 64–93 (WGNT…NIWC), and 97–126 (DYHT…KQSS). Disordered regions lie at residues 208 to 243 (GTAR…SARS) and 332 to 368 (EDGG…DRSC). The segment covering 210 to 222 (ARGKTKMQKKLER) has biased composition (basic residues). The SAM domain occupies 385–447 (LEPETSPLET…KILGAVRRRR (63 aa)). Phosphoserine; by CK2 is present on serine 422.

As to quaternary structure, part of a complex composed of USH1C, USH1G and MYO7A. Interacts with USH1C (via the first PDZ domain). Interacts with PDZD7. Interacts with CDH23 and PCDH15; these interactions may recruit USH1G to the plasma membrane. Interacts with intraflagellar transport proteins IFT20, IFT52 and IFT57. Interacts with splicing factors SF3B1, PRPF6, PRPF31 and SON. Interacts with the U4/U6.U5 tri-small nuclear ribonucleoprotein (tri-snRNP) complex in the presence of pre-mRNAs. Interacts (via SAM domain) with MAGI2 (via PDZ 6 domain); the interaction is triggered by phosphorylation of USH1G by CK2 and negatively regulates MAGI2-mediated endocytosis. In terms of tissue distribution, expressed in vestibule of the inner ear, eye and small intestine.

Its subcellular location is the cytoplasm. It localises to the cytosol. The protein resides in the cytoskeleton. The protein localises to the cell membrane. It is found in the cell projection. Its subcellular location is the cilium. It localises to the nucleus speckle. The protein resides in the nucleus. The protein localises to the cajal body. It is found in the microtubule organizing center. Its subcellular location is the centrosome. It localises to the photoreceptor inner segment. Its function is as follows. Plays a role in pre-mRNA splicing by regulating the release and transfer of U4/U6.U5 tri-small nuclear ribonucleoprotein (tri-snRNP) complexes from their assembly site in Cajal bodies to nuclear speckles, thereby contributing to the assembly of the pre-catalytic spliceosome on target pre-mRNAs. May also participate in recycling of snRNPs back to Cajal bodies during splicing. Plays a role in regulating MAGI2-mediated endocytosis. Anchoring/scaffolding protein that is a part of the functional network formed by USH1C, USH1G, CDH23 and MYO7A that mediates mechanotransduction in cochlear hair cells. Required for normal development and maintenance of cochlear hair cell bundles. Required for normal hearing. The polypeptide is pre-mRNA splicing regulator USH1G (USH1G) (Homo sapiens (Human)).